The sequence spans 75 residues: uncharacterized protein (75 aa).

2 helical membrane-spanning segments follow: residues 5-25 (VIIC…IFEI) and 42-62 (VAIF…GSVL).

Its subcellular location is the membrane. This is an uncharacterized protein from Saccharomyces cerevisiae (strain ATCC 204508 / S288c) (Baker's yeast).